Consider the following 283-residue polypeptide: NAD kinase (283 aa).

Asp67 (proton acceptor) is an active-site residue. Residues 67 to 68, Arg72, 136 to 137, Lys147, Arg164, Asp166, 177 to 182, and Gln236 contribute to the NAD(+) site; these read DG, NE, and TAYSMS.

This sequence belongs to the NAD kinase family. The cofactor is a divalent metal cation.

Its subcellular location is the cytoplasm. It catalyses the reaction NAD(+) + ATP = ADP + NADP(+) + H(+). In terms of biological role, involved in the regulation of the intracellular balance of NAD and NADP, and is a key enzyme in the biosynthesis of NADP. Catalyzes specifically the phosphorylation on 2'-hydroxyl of the adenosine moiety of NAD to yield NADP. The polypeptide is NAD kinase (Methanothermobacter thermautotrophicus (strain ATCC 29096 / DSM 1053 / JCM 10044 / NBRC 100330 / Delta H) (Methanobacterium thermoautotrophicum)).